The primary structure comprises 209 residues: Thiamine-phosphate synthase (209 aa).

Residues 37-41 (QYRDK) and Asn69 each bind 4-amino-2-methyl-5-(diphosphooxymethyl)pyrimidine. Mg(2+) contacts are provided by Asp70 and Asp89. Ser108 is a binding site for 4-amino-2-methyl-5-(diphosphooxymethyl)pyrimidine. A 2-[(2R,5Z)-2-carboxy-4-methylthiazol-5(2H)-ylidene]ethyl phosphate-binding site is contributed by 135–137 (SPT). Position 138 (Lys138) interacts with 4-amino-2-methyl-5-(diphosphooxymethyl)pyrimidine. 2-[(2R,5Z)-2-carboxy-4-methylthiazol-5(2H)-ylidene]ethyl phosphate contacts are provided by residues Gly165 and 185–186 (VS).

Belongs to the thiamine-phosphate synthase family. Requires Mg(2+) as cofactor.

The catalysed reaction is 2-[(2R,5Z)-2-carboxy-4-methylthiazol-5(2H)-ylidene]ethyl phosphate + 4-amino-2-methyl-5-(diphosphooxymethyl)pyrimidine + 2 H(+) = thiamine phosphate + CO2 + diphosphate. The enzyme catalyses 2-(2-carboxy-4-methylthiazol-5-yl)ethyl phosphate + 4-amino-2-methyl-5-(diphosphooxymethyl)pyrimidine + 2 H(+) = thiamine phosphate + CO2 + diphosphate. It catalyses the reaction 4-methyl-5-(2-phosphooxyethyl)-thiazole + 4-amino-2-methyl-5-(diphosphooxymethyl)pyrimidine + H(+) = thiamine phosphate + diphosphate. It participates in cofactor biosynthesis; thiamine diphosphate biosynthesis; thiamine phosphate from 4-amino-2-methyl-5-diphosphomethylpyrimidine and 4-methyl-5-(2-phosphoethyl)-thiazole: step 1/1. Its function is as follows. Condenses 4-methyl-5-(beta-hydroxyethyl)thiazole monophosphate (THZ-P) and 2-methyl-4-amino-5-hydroxymethyl pyrimidine pyrophosphate (HMP-PP) to form thiamine monophosphate (TMP). The chain is Thiamine-phosphate synthase from Halorhodospira halophila (strain DSM 244 / SL1) (Ectothiorhodospira halophila (strain DSM 244 / SL1)).